The sequence spans 207 residues: Small ribosomal subunit protein uS4 (207 aa).

Residues 97–160 (SRLDNVVYRM…KKQARIVEAL (64 aa)) form the S4 RNA-binding domain.

This sequence belongs to the universal ribosomal protein uS4 family. Part of the 30S ribosomal subunit. Contacts protein S5. The interaction surface between S4 and S5 is involved in control of translational fidelity.

Its function is as follows. One of the primary rRNA binding proteins, it binds directly to 16S rRNA where it nucleates assembly of the body of the 30S subunit. With S5 and S12 plays an important role in translational accuracy. This Burkholderia mallei (strain NCTC 10247) protein is Small ribosomal subunit protein uS4.